Here is a 515-residue protein sequence, read N- to C-terminus: Sugar transport protein MST4 (515 aa).

The Cytoplasmic segment spans residues 1–17; the sequence is MAGGFSVSGSGVEFEAK. The chain crosses the membrane as a helical span at residues 18–38; it reads ITPIVIISCIMAATGGLMFGY. At 39 to 78 the chain is on the extracellular side; sequence DVGISGGVTSMDDFLREFFPTVLKKKHEDKESNYCKYDNQ. A helical transmembrane segment spans residues 79–99; that stretch reads GLQLFTSSLYLAGLTATFFAS. Residues 100-108 lie on the Cytoplasmic side of the membrane; that stretch reads YTTRRLGRR. A helical transmembrane segment spans residues 109–129; it reads LTMLIAGVFFIVGVIFNGAAQ. At 130–138 the chain is on the extracellular side; sequence NLAMLIVGR. A helical transmembrane segment spans residues 139 to 159; sequence ILLGCGVGFANQAVPLFLSEI. At 160-165 the chain is on the cytoplasmic side; it reads APTRIR. The helical transmembrane segment at 166–186 threads the bilayer; that stretch reads GGLNILFQLNVTIGILFANLV. The Extracellular segment spans residues 187–199; that stretch reads NYGTAKIHPWGWR. Residues 200–220 traverse the membrane as a helical segment; it reads LSLSLAGIPAALLTLGALFVV. Topologically, residues 221-280 are cytoplasmic; it reads DTPNSLIERGRLEEGKAVLRKIRGTDNVEPEFNEIVEASRVAQEVKHPFRNLLQRRNRPQ. A helical transmembrane segment spans residues 281-301; sequence LVIAVLLQIFQQFTGINAIMF. The Extracellular segment spans residues 302 to 315; that stretch reads YAPVLFNTLGFKTD. A helical transmembrane segment spans residues 316 to 336; sequence ASLYSAVITGAVNVLSTLVSV. Over 337 to 347 the chain is Cytoplasmic; the sequence is YSVDRVGRRML. A helical membrane pass occupies residues 348 to 368; the sequence is LLEAGVQMFLSQVAIAVVLGI. The Extracellular segment spans residues 369-379; that stretch reads KVTDRSDNLGH. A helical membrane pass occupies residues 380 to 400; sequence GWAIMVVVMVCTFVSSFAWSW. Residues 401 to 422 lie on the Cytoplasmic side of the membrane; sequence GPLGWLIPSETFPLETRSAGQS. Residues 423 to 443 traverse the membrane as a helical segment; that stretch reads VTVCVNLLFTFVIAQAFLSML. Over 444-448 the chain is Extracellular; that stretch reads CHLKY. The helical transmembrane segment at 449-469 threads the bilayer; it reads AIFAFFSAWVVVMSLFVLFFL. The Cytoplasmic portion of the chain corresponds to 470-515; it reads PETKNIPIEEMTERVWKQHWFWKRFMDDADKHHVVPNGGKSNGATV.

This sequence belongs to the major facilitator superfamily. Sugar transporter (TC 2.A.1.1) family. In terms of tissue distribution, expressed in roots, shoots, leaf blades, leaf sheaths, anthers, ovaries and embryos.

The protein localises to the membrane. Its function is as follows. Mediates active uptake of hexoses by sugar:proton symport. Can transport glucose, fructose, mannose and galactose. Can transport xylose and ribose. This is Sugar transport protein MST4 from Oryza sativa subsp. japonica (Rice).